A 288-amino-acid polypeptide reads, in one-letter code: Solute carrier family 25 member 47-B (288 aa).

Solcar repeat units follow at residues 1–83 (MHLA…ILQF), 99–191 (AHIF…ICEI), and 199–286 (PGWP…VVRL). Transmembrane regions (helical) follow at residues 3–23 (LADF…GYPL), 58–75 (GMSM…LVFG), 101–121 (IFLA…PADI), 175–195 (GPSF…LTTE), 199–219 (PGWP…WAVG), and 257–277 (VLFR…MSVF).

Belongs to the mitochondrial carrier (TC 2.A.29) family.

It localises to the mitochondrion inner membrane. The protein is Solute carrier family 25 member 47-B (slc25a47b) of Danio rerio (Zebrafish).